We begin with the raw amino-acid sequence, 240 residues long: Phosphoribosylaminoimidazole-succinocarboxamide synthase (240 aa).

The protein belongs to the SAICAR synthetase family.

The enzyme catalyses 5-amino-1-(5-phospho-D-ribosyl)imidazole-4-carboxylate + L-aspartate + ATP = (2S)-2-[5-amino-1-(5-phospho-beta-D-ribosyl)imidazole-4-carboxamido]succinate + ADP + phosphate + 2 H(+). Its pathway is purine metabolism; IMP biosynthesis via de novo pathway; 5-amino-1-(5-phospho-D-ribosyl)imidazole-4-carboxamide from 5-amino-1-(5-phospho-D-ribosyl)imidazole-4-carboxylate: step 1/2. This is Phosphoribosylaminoimidazole-succinocarboxamide synthase from Acidithiobacillus ferrooxidans (strain ATCC 23270 / DSM 14882 / CIP 104768 / NCIMB 8455) (Ferrobacillus ferrooxidans (strain ATCC 23270)).